The primary structure comprises 214 residues: Pyridoxine/pyridoxamine 5'-phosphate oxidase (214 aa).

Substrate contacts are provided by residues 8–11 (RLSY) and arginine 66. FMN is bound by residues 61 to 66 (RTVLLR), 76 to 77 (FT), lysine 83, and glutamine 105. Substrate is bound by residues tyrosine 123, arginine 127, and serine 131. The segment at 126–146 (SRPRESQLAAHASDPQSAPVS) is disordered. FMN is bound by residues 141–142 (QS) and tryptophan 187. 193–195 (RMH) serves as a coordination point for substrate. FMN is bound at residue arginine 197.

The protein belongs to the pyridoxamine 5'-phosphate oxidase family. As to quaternary structure, homodimer. The cofactor is FMN.

The catalysed reaction is pyridoxamine 5'-phosphate + O2 + H2O = pyridoxal 5'-phosphate + H2O2 + NH4(+). The enzyme catalyses pyridoxine 5'-phosphate + O2 = pyridoxal 5'-phosphate + H2O2. It functions in the pathway cofactor metabolism; pyridoxal 5'-phosphate salvage; pyridoxal 5'-phosphate from pyridoxamine 5'-phosphate: step 1/1. It participates in cofactor metabolism; pyridoxal 5'-phosphate salvage; pyridoxal 5'-phosphate from pyridoxine 5'-phosphate: step 1/1. Its function is as follows. Catalyzes the oxidation of either pyridoxine 5'-phosphate (PNP) or pyridoxamine 5'-phosphate (PMP) into pyridoxal 5'-phosphate (PLP). The protein is Pyridoxine/pyridoxamine 5'-phosphate oxidase of Deinococcus deserti (strain DSM 17065 / CIP 109153 / LMG 22923 / VCD115).